The chain runs to 335 residues: Ubiquinone biosynthesis protein COQ4, mitochondrial (335 aa).

Residues 1–10 constitute a mitochondrion transit peptide; sequence MLRLSLLRST. The Zn(2+) site is built by His-210, Asp-211, His-214, and Glu-226.

Belongs to the COQ4 family. Component of a multi-subunit COQ enzyme complex, composed of at least COQ3, COQ4, COQ5, COQ6, COQ7 and COQ9. Interacts with COQ3. It depends on Zn(2+) as a cofactor.

It localises to the mitochondrion inner membrane. It catalyses the reaction 4-hydroxy-3-methoxy-5-(all-trans-hexaprenyl)benzoate + H(+) = 2-methoxy-6-(all-trans-hexaprenyl)phenol + CO2. The protein operates within cofactor biosynthesis; ubiquinone biosynthesis. Its function is as follows. Lyase that catalyzes the C1-decarboxylation of 4-hydroxy-3-methoxy-5-(all-trans-hexaprenyl)benzoic acid into 2-methoxy-6-(all-trans-hexaprenyl)phenol during ubiquinone biosynthesis. The protein is Ubiquinone biosynthesis protein COQ4, mitochondrial of Saccharomyces cerevisiae (strain YJM789) (Baker's yeast).